A 418-amino-acid polypeptide reads, in one-letter code: Transmembrane protease serine 11A (418 aa).

The Cytoplasmic portion of the chain corresponds to 1 to 18 (MMYRTVGFGTRSRNLKPW). The chain crosses the membrane as a helical; Signal-anchor for type II membrane protein span at residues 19-39 (MIAVLIVLSLTVVAVTIGLLV). The Extracellular segment spans residues 40–418 (HFLVFDQKKE…RNWIASKTGI (379 aa)). An SEA domain is found at 47-164 (KKEYYHGSFK…SSVQVNAMSS (118 aa)). An N-linked (GlcNAc...) asparagine glycan is attached at asparagine 153. Residues 187–417 (IASGVIAPKA…YRNWIASKTG (231 aa)) enclose the Peptidase S1 domain. Cysteines 212 and 228 form a disulfide. Residues histidine 227 and aspartate 272 each act as charge relay system in the active site. N-linked (GlcNAc...) asparagine glycosylation is present at asparagine 303. Intrachain disulfides connect cysteine 337–cysteine 353 and cysteine 364–cysteine 393. The active-site Charge relay system is the serine 368.

Belongs to the peptidase S1 family. In terms of assembly, may interact with ZBTB17. Expressed in esophagus, liver, colon and lung. Down-regulated in esophagus cancers.

It localises to the membrane. Probable serine protease which may play a role in cellular senescence. Overexpression inhibits cell growth and induce G1 cell cycle arrest. This chain is Transmembrane protease serine 11A (TMPRSS11A), found in Homo sapiens (Human).